The primary structure comprises 111 residues: Photosystem II reaction center Psb28 protein (111 aa).

It belongs to the Psb28 family. In terms of assembly, part of the photosystem II complex.

The protein localises to the cellular thylakoid membrane. This Trichormus variabilis (strain ATCC 29413 / PCC 7937) (Anabaena variabilis) protein is Photosystem II reaction center Psb28 protein.